Consider the following 152-residue polypeptide: Transcriptional regulator MraZ (152 aa).

SpoVT-AbrB domains lie at 5 to 52 (ASAI…PLDE) and 81 to 124 (AHEC…DEAA).

The protein belongs to the MraZ family. In terms of assembly, forms oligomers.

Its subcellular location is the cytoplasm. It localises to the nucleoid. The protein is Transcriptional regulator MraZ of Shewanella violacea (strain JCM 10179 / CIP 106290 / LMG 19151 / DSS12).